The chain runs to 196 residues: Probable malonic semialdehyde reductase RutE (196 aa).

The protein belongs to the nitroreductase family. HadB/RutE subfamily. FMN serves as cofactor.

It catalyses the reaction 3-hydroxypropanoate + NADP(+) = 3-oxopropanoate + NADPH + H(+). In terms of biological role, may reduce toxic product malonic semialdehyde to 3-hydroxypropionic acid, which is excreted. This chain is Probable malonic semialdehyde reductase RutE, found in Escherichia coli O157:H7.